The chain runs to 113 residues: MSLLPVMVIFGLSFPPVLFEMILSLALFFALRRFLLPSGIYDFVWHPALFNTALYCCVFYLISCHSGADCRYRYFPCLVLLYRIALDAGRQIHRRCGGHCAGRQRPAQRRAYS.

2 consecutive transmembrane segments (helical) span residues 3 to 23 and 43 to 63; these read LLPV…EMIL and FVWH…YLIS.

This sequence belongs to the AaeX family.

It localises to the cell membrane. This Sodalis glossinidius (strain morsitans) protein is Protein AaeX.